Consider the following 20-residue polypeptide: Implantin (20 aa).

The protein belongs to the EF-1-beta/EF-1-delta family. Phosphorylated. Uterus and embryo.

The protein resides in the cytoplasm. It localises to the nucleus. Its function is as follows. Binds DNA. The polypeptide is Implantin (Mus musculus (Mouse)).